Consider the following 428-residue polypeptide: Involucrin (428 aa).

Disordered stretches follow at residues 1-128 and 140-398; these read MSQQ…EEKK and KRDD…GQAQ. Residues 56 to 76 are compositionally biased toward basic and acidic residues; sequence PSKHEEKHVTIVKGVPEHECE. Residues 77–92 show a composition bias toward low complexity; that stretch reads QQQQAQGQERQQQHWG. Basic and acidic residues-rich tracts occupy residues 107-117, 162-174, and 192-208; these read LKQEEAQREKQ, QLKH…KPLE, and QLKH…HLEQ. The span at 209–218 shows a compositional bias: low complexity; that stretch reads QEGQLELPEQ. A compositionally biased stretch (basic and acidic residues) spans 220–297; the sequence is DQPKHLEQLE…CEGQLEHLEQ (78 aa). The span at 298–311 shows a compositional bias: low complexity; it reads QEGQLELPEQQVGQ. 3 stretches are compositionally biased toward basic and acidic residues: residues 313-327, 352-366, and 374-385; these read KHLE…HPEQ and QLKDLEQQERQL.

Belongs to the involucrin family. Directly or indirectly cross-linked to cornifelin (CNFN). In terms of processing, substrate of transglutaminase. Specific glutamines or lysines are cross-linked to keratins, desmoplakin and to inter involucrin molecules. Keratinocytes of epidermis and other stratified squamous epithelia.

The protein resides in the cytoplasm. Its function is as follows. Part of the insoluble cornified cell envelope (CE) of stratified squamous epithelia. The sequence is that of Involucrin (IVL) from Cebus albifrons (White-fronted capuchin).